Consider the following 990-residue polypeptide: Tyrosine-protein phosphatase 3 (990 aa).

Disordered stretches follow at residues 47–88, 100–193, 246–414, and 431–452; these read QSQS…SPSV, NKIN…SNIE, PNQQ…SFSQ, and KPEM…HNDL. Low complexity-rich tracts occupy residues 52 to 88 and 100 to 117; these read NTNT…SPSV and NKIN…NNNN. Residues 127–136 are compositionally biased toward polar residues; that stretch reads LKLSNTMIIK. Low complexity-rich tracts occupy residues 137-191, 250-271, 278-293, 310-327, and 334-413; these read NNNN…SNSN, SSSS…SSLL, NNST…NSSN, QAQV…QHQQ, and NLSS…TSFS. One can recognise a Tyrosine-protein phosphatase domain in the interval 422–715; sequence MRLEFEMIKK…IFIFKVINDV (294 aa). The span at 437–447 shows a compositional bias: basic residues; that stretch reads KKSHKHHQRHY. Cys650 (phosphocysteine intermediate) is an active-site residue. Over residues 786–795 the composition is skewed to polar residues; sequence PPQQQQDNPF. Disordered regions lie at residues 786-814 and 834-990; these read PPQQ…NISI and LQQQ…IKCF. Composition is skewed to low complexity over residues 796–806 and 834–850; these read SKSSIKISPSP and LQQQ…DNPP. Polar residues predominate over residues 851–868; the sequence is LNMSSNSIKFPPVTSLSS. Composition is skewed to low complexity over residues 878–916 and 924–968; these read NDNN…DNNG and GSFL…SDNN.

This sequence belongs to the protein-tyrosine phosphatase family. Non-receptor class subfamily. In terms of tissue distribution, in the anterior-like and prestalk cell types.

It is found in the cytoplasm. The enzyme catalyses O-phospho-L-tyrosyl-[protein] + H2O = L-tyrosyl-[protein] + phosphate. Its function is as follows. Seems to dephosphorylate a protein of 130 kDa (p130). This chain is Tyrosine-protein phosphatase 3 (ptpC), found in Dictyostelium discoideum (Social amoeba).